A 229-amino-acid chain; its full sequence is 1-(5-phosphoribosyl)-5-[(5-phosphoribosylamino)methylideneamino] imidazole-4-carboxamide isomerase (229 aa).

Asp-8 (proton acceptor) is an active-site residue. Asp-125 functions as the Proton donor in the catalytic mechanism.

It belongs to the HisA/HisF family.

It is found in the cytoplasm. The catalysed reaction is 1-(5-phospho-beta-D-ribosyl)-5-[(5-phospho-beta-D-ribosylamino)methylideneamino]imidazole-4-carboxamide = 5-[(5-phospho-1-deoxy-D-ribulos-1-ylimino)methylamino]-1-(5-phospho-beta-D-ribosyl)imidazole-4-carboxamide. It functions in the pathway amino-acid biosynthesis; L-histidine biosynthesis; L-histidine from 5-phospho-alpha-D-ribose 1-diphosphate: step 4/9. This Thermococcus onnurineus (strain NA1) protein is 1-(5-phosphoribosyl)-5-[(5-phosphoribosylamino)methylideneamino] imidazole-4-carboxamide isomerase.